Reading from the N-terminus, the 234-residue chain is MKDEEKNLIENLFHRLKKIELNCSERDDTADVLIQNLVKKQPYSSYYMVQTILIQETAIKKMNLKIEELKNQISILNSDQVNKKPSFLSNFLKKDPGSKTISYDNTIWKKNQNNLESCNTNIPSSSAATTRNSGFLKNALQTATGVAGGMILGNMLMNLFNHTTPEEEIFDNINQSSASDIDNEYDSIQNNHSDLVNYDNQNEPLENYSDDNNFSNFDETEHVDDSEMNDDNFI.

The segment at 199–234 is disordered; that stretch reads DNQNEPLENYSDDNNFSNFDETEHVDDSEMNDDNFI.

This is an uncharacterized protein from Buchnera aphidicola subsp. Schizaphis graminum (strain Sg).